The sequence spans 540 residues: Bifunctional pantoate ligase/cytidylate kinase (540 aa).

The pantoate--beta-alanine ligase stretch occupies residues 1–280; it reads MQWLRTVAAL…VGQTRLIDNL (280 aa). Position 28 to 35 (28 to 35) interacts with ATP; the sequence is MGSLHEGH. H35 acts as the Proton donor in catalysis. Residue Q59 participates in (R)-pantoate binding. Q59 provides a ligand contact to beta-alanine. 150-153 is a binding site for ATP; that stretch reads GQKD. (R)-pantoate is bound at residue Q156. Residues V179 and 187–190 contribute to the ATP site; that span reads YSSR. The cytidylate kinase stretch occupies residues 281–540; it reads LLSPEGVDPL…RSGAAHFDII (260 aa). Residues 288–307 are disordered; that stretch reads DPLPQEQQSAVPPSPKRGRR.

It in the N-terminal section; belongs to the pantothenate synthetase family. In the C-terminal section; belongs to the cytidylate kinase family. Type 1 subfamily.

The protein localises to the cytoplasm. It catalyses the reaction (R)-pantoate + beta-alanine + ATP = (R)-pantothenate + AMP + diphosphate + H(+). It carries out the reaction CMP + ATP = CDP + ADP. The catalysed reaction is dCMP + ATP = dCDP + ADP. It participates in cofactor biosynthesis; (R)-pantothenate biosynthesis; (R)-pantothenate from (R)-pantoate and beta-alanine: step 1/1. Its function is as follows. Catalyzes the condensation of pantoate with beta-alanine in an ATP-dependent reaction via a pantoyl-adenylate intermediate. In terms of biological role, catalyzes the transfer of a phosphate group from ATP to either CMP or dCMP to form CDP or dCDP and ADP, respectively. This chain is Bifunctional pantoate ligase/cytidylate kinase, found in Synechococcus sp. (strain JA-3-3Ab) (Cyanobacteria bacterium Yellowstone A-Prime).